The following is a 232-amino-acid chain: Phosphatidylserine decarboxylase proenzyme (232 aa).

The active-site Schiff-base intermediate with substrate; via pyruvic acid is S201. S201 is subject to Pyruvic acid (Ser); by autocatalysis.

This sequence belongs to the phosphatidylserine decarboxylase family. PSD-A subfamily. In terms of assembly, heterodimer of a large membrane-associated beta subunit and a small pyruvoyl-containing alpha subunit. Pyruvate is required as a cofactor. Is synthesized initially as an inactive proenzyme. Formation of the active enzyme involves a self-maturation process in which the active site pyruvoyl group is generated from an internal serine residue via an autocatalytic post-translational modification. Two non-identical subunits are generated from the proenzyme in this reaction, and the pyruvate is formed at the N-terminus of the alpha chain, which is derived from the carboxyl end of the proenzyme. The post-translation cleavage follows an unusual pathway, termed non-hydrolytic serinolysis, in which the side chain hydroxyl group of the serine supplies its oxygen atom to form the C-terminus of the beta chain, while the remainder of the serine residue undergoes an oxidative deamination to produce ammonia and the pyruvoyl prosthetic group on the alpha chain.

It is found in the cell membrane. The catalysed reaction is a 1,2-diacyl-sn-glycero-3-phospho-L-serine + H(+) = a 1,2-diacyl-sn-glycero-3-phosphoethanolamine + CO2. It functions in the pathway phospholipid metabolism; phosphatidylethanolamine biosynthesis; phosphatidylethanolamine from CDP-diacylglycerol: step 2/2. Functionally, catalyzes the formation of phosphatidylethanolamine (PtdEtn) from phosphatidylserine (PtdSer). In Mycolicibacterium gilvum (strain PYR-GCK) (Mycobacterium gilvum (strain PYR-GCK)), this protein is Phosphatidylserine decarboxylase proenzyme.